The following is a 245-amino-acid chain: 1-(5-phosphoribosyl)-5-[(5-phosphoribosylamino)methylideneamino] imidazole-4-carboxamide isomerase (245 aa).

D8 serves as the catalytic Proton acceptor. The Proton donor role is filled by D129.

It belongs to the HisA/HisF family.

It is found in the cytoplasm. It carries out the reaction 1-(5-phospho-beta-D-ribosyl)-5-[(5-phospho-beta-D-ribosylamino)methylideneamino]imidazole-4-carboxamide = 5-[(5-phospho-1-deoxy-D-ribulos-1-ylimino)methylamino]-1-(5-phospho-beta-D-ribosyl)imidazole-4-carboxamide. The protein operates within amino-acid biosynthesis; L-histidine biosynthesis; L-histidine from 5-phospho-alpha-D-ribose 1-diphosphate: step 4/9. The sequence is that of 1-(5-phosphoribosyl)-5-[(5-phosphoribosylamino)methylideneamino] imidazole-4-carboxamide isomerase from Geotalea daltonii (strain DSM 22248 / JCM 15807 / FRC-32) (Geobacter daltonii).